A 101-amino-acid polypeptide reads, in one-letter code: Protein Tat (101 aa).

Positions 1–12 (MEPVDPRLEPWK) are enriched in basic and acidic residues. The tract at residues 1-20 (MEPVDPRLEPWKHPGSQPKT) is disordered. The tract at residues 1 to 24 (MEPVDPRLEPWKHPGSQPKTACTT) is interaction with human CREBBP. A transactivation region spans residues 1-48 (MEPVDPRLEPWKHPGSQPKTACTTCYCKKCCFHCQVCFTKKALGISYG). Positions 22, 25, and 27 each coordinate Zn(2+). The segment at 22 to 37 (CTTCYCKKCCFHCQVC) is cysteine-rich. K28 is modified (N6-acetyllysine; by host PCAF). 4 residues coordinate Zn(2+): C30, H33, C34, and C37. The tract at residues 38–48 (FTKKALGISYG) is core. The interval 47 to 101 (YGRKKRRQRRRAPEDSQTHQVSLPKQPAPQFRGDPTGPKESKKKVERETETHPVD) is disordered. The Nuclear localization signal, RNA-binding (TAR), and protein transduction signature appears at 49–57 (RKKRRQRRR). The interaction with the host capping enzyme RNGTT stretch occupies residues 49 to 86 (RKKRRQRRRAPEDSQTHQVSLPKQPAPQFRGDPTGPKE). N6-acetyllysine; by host EP300 and GCN5L2 is present on residues K50 and K51. Asymmetric dimethylarginine; by host PRMT6 is present on residues R52 and R53. A Glycyl lysine isopeptide (Lys-Gly) (interchain with G-Cter in ubiquitin) cross-link involves residue K71. The short motif at 78–80 (RGD) is the Cell attachment site element. The span at 83–101 (GPKESKKKVERETETHPVD) shows a compositional bias: basic and acidic residues.

The protein belongs to the lentiviruses Tat family. In terms of assembly, interacts with host CCNT1. Associates with the P-TEFb complex composed at least of Tat, P-TEFb (CDK9 and CCNT1), TAR RNA, RNA Pol II. Recruits the HATs CREBBP, TAF1/TFIID, EP300, PCAF and GCN5L2. Interacts with host KAT5/Tip60; this interaction targets the latter to degradation. Interacts with the host deacetylase SIRT1. Interacts with host capping enzyme RNGTT; this interaction stimulates RNGTT. Binds to host KDR, and to the host integrins ITGAV/ITGB3 and ITGA5/ITGB1. Interacts with host KPNB1/importin beta-1 without previous binding to KPNA1/importin alpha-1. Interacts with EIF2AK2. Interacts with host nucleosome assembly protein NAP1L1; this interaction may be required for the transport of Tat within the nucleus, since the two proteins interact at the nuclear rim. Interacts with host C1QBP/SF2P32; this interaction involves lysine-acetylated Tat. Interacts with the host chemokine receptors CCR2, CCR3 and CXCR4. Interacts with host DPP4/CD26; this interaction may trigger an anti-proliferative effect. Interacts with host LDLR. Interacts with the host extracellular matrix metalloproteinase MMP1. Interacts with host PRMT6; this interaction mediates Tat's methylation. Interacts with, and is ubiquitinated by MDM2/Hdm2. Interacts with host PSMC3 and HTATIP2. Interacts with STAB1; this interaction may overcome SATB1-mediated repression of IL2 and IL2RA (interleukin) in T cells by binding to the same domain than HDAC1. Interacts (when acetylated) with human CDK13, thereby increasing HIV-1 mRNA splicing and promoting the production of the doubly spliced HIV-1 protein Nef. Interacts with host TBP; this interaction modulates the activity of transcriptional pre-initiation complex. Interacts with host RELA. Interacts with host PLSCR1; this interaction negatively regulates Tat transactivation activity by altering its subcellular distribution. In terms of processing, asymmetrical arginine methylation by host PRMT6 seems to diminish the transactivation capacity of Tat and affects the interaction with host CCNT1. Acetylation by EP300, CREBBP, GCN5L2/GCN5 and PCAF regulates the transactivation activity of Tat. EP300-mediated acetylation of Lys-50 promotes dissociation of Tat from the TAR RNA through the competitive binding to PCAF's bromodomain. In addition, the non-acetylated Tat's N-terminus can also interact with PCAF. PCAF-mediated acetylation of Lys-28 enhances Tat's binding to CCNT1. Lys-50 is deacetylated by SIRT1. Post-translationally, polyubiquitination by host MDM2 does not target Tat to degradation, but activates its transactivation function and fosters interaction with CCNT1 and TAR RNA. In terms of processing, phosphorylated by EIF2AK2 on serine and threonine residues adjacent to the basic region important for TAR RNA binding and function. Phosphorylation of Tat by EIF2AK2 is dependent on the prior activation of EIF2AK2 by dsRNA.

It localises to the host nucleus. The protein localises to the host nucleolus. It is found in the host cytoplasm. The protein resides in the secreted. In terms of biological role, transcriptional activator that increases RNA Pol II processivity, thereby increasing the level of full-length viral transcripts. Recognizes a hairpin structure at the 5'-LTR of the nascent viral mRNAs referred to as the transactivation responsive RNA element (TAR) and recruits the cyclin T1-CDK9 complex (P-TEFb complex) that will in turn hyperphosphorylate the RNA polymerase II to allow efficient elongation. The CDK9 component of P-TEFb and other Tat-activated kinases hyperphosphorylate the C-terminus of RNA Pol II that becomes stabilized and much more processive. Other factors such as HTATSF1/Tat-SF1, SUPT5H/SPT5, and HTATIP2 are also important for Tat's function. Besides its effect on RNA Pol II processivity, Tat induces chromatin remodeling of proviral genes by recruiting the histone acetyltransferases (HATs) CREBBP, EP300 and PCAF to the chromatin. This also contributes to the increase in proviral transcription rate, especially when the provirus integrates in transcriptionally silent region of the host genome. To ensure maximal activation of the LTR, Tat mediates nuclear translocation of NF-kappa-B by interacting with host RELA. Through its interaction with host TBP, Tat may also modulate transcription initiation. Tat can reactivate a latently infected cell by penetrating in it and transactivating its LTR promoter. In the cytoplasm, Tat is thought to act as a translational activator of HIV-1 mRNAs. Extracellular circulating Tat can be endocytosed by surrounding uninfected cells via the binding to several surface receptors such as CD26, CXCR4, heparan sulfate proteoglycans (HSPG) or LDLR. Neurons are rarely infected, but they internalize Tat via their LDLR. Through its interaction with nuclear HATs, Tat is potentially able to control the acetylation-dependent cellular gene expression. Modulates the expression of many cellular genes involved in cell survival, proliferation or in coding for cytokines or cytokine receptors. Tat plays a role in T-cell and neurons apoptosis. Tat induced neurotoxicity and apoptosis probably contribute to neuroAIDS. Circulating Tat also acts as a chemokine-like and/or growth factor-like molecule that binds to specific receptors on the surface of the cells, affecting many cellular pathways. In the vascular system, Tat binds to ITGAV/ITGB3 and ITGA5/ITGB1 integrins dimers at the surface of endothelial cells and competes with bFGF for heparin-binding sites, leading to an excess of soluble bFGF. The protein is Protein Tat of Human immunodeficiency virus type 1 group M subtype B (isolate MN) (HIV-1).